Reading from the N-terminus, the 343-residue chain is Putative trace amine-associated receptor 3 (343 aa).

Residues 1-35 (MDLTYIPEDLSSCPKFVNKILSSHQPLFSCPGDNV) are Extracellular-facing. The helical transmembrane segment at 36 to 56 (FGYDWSHDYPLFGNLVIMVSI) threads the bilayer. Residues 57 to 68 (SHFKQLHSPTNF) lie on the Cytoplasmic side of the membrane. A helical membrane pass occupies residues 69 to 89 (LILSMATTDFLLGFVIMPYSI). The Extracellular segment spans residues 90-150 (MRSVESCWYF…TKMTNSTIKQ (61 aa)). A disulfide bond links Cys-104 and Cys-189. An N-linked (GlcNAc...) asparagine glycan is attached at Asn-145. A helical membrane pass occupies residues 151–168 (LLAFCWSVPALFSFGLVL). The Cytoplasmic segment spans residues 169–172 (SEAD). The tract at residues 173-186 (VSGMQSYKILVACF) is extracellular Loop 2 (ECL2). A helical transmembrane segment spans residues 173-193 (VSGMQSYKILVACFNFCALTF). Topologically, residues 194 to 198 (NKFWG) are extracellular. The chain crosses the membrane as a helical span at residues 199 to 223 (TILFTTCFFTPGSIMVGIYGKIFIV). Topologically, residues 224 to 257 (SKQHARVISHVPENTKGAVKKHLSKKKDRKAAKT) are cytoplasmic. Residues 258–278 (LGIVMGVFLACWLPCFLAVLI) form a helical membrane-spanning segment. The Extracellular segment spans residues 279 to 287 (DPYLDYSTP). A helical transmembrane segment spans residues 288 to 308 (ILILDLLVWLRYFNSTCNPLI). The Cytoplasmic segment spans residues 309-343 (HGFFNPWFQKAFKYIVSGKIFSSHSETANLFPEAH).

Belongs to the G-protein coupled receptor 1 family. As to expression, not expressed in the pons, thalamus, globus pallidus, caudate, putamen or cerebellum.

It is found in the cell membrane. Functionally, putative olfactory receptor activated by several primary trace amines. This chain is Putative trace amine-associated receptor 3, found in Homo sapiens (Human).